The chain runs to 307 residues: Auxin-induced protein PCNT115 (307 aa).

Tyrosine 64 serves as the catalytic Proton donor. Substrate is bound at residue histidine 136. Residue 215–225 (SPLGRGFLSSG) coordinates NADP(+).

Belongs to the aldo/keto reductase family. Aldo/keto reductase 2 subfamily.

The polypeptide is Auxin-induced protein PCNT115 (Nicotiana tabacum (Common tobacco)).